Here is a 520-residue protein sequence, read N- to C-terminus: 2-methylcitrate dehydratase, mitochondrial (520 aa).

A mitochondrion-targeting transit peptide spans 1–37 (MRAFRSAANFGAASNIYRKSFTPASIASNRFVSARMS).

The protein belongs to the PrpD family. Monomer.

It is found in the mitochondrion. The enzyme catalyses (2S,3S)-2-methylcitrate = 2-methyl-cis-aconitate + H2O. It participates in organic acid metabolism; propanoate degradation. With respect to regulation, several bivalent metal ions, such as nickel, copper, zinc, mercury, and lead, inhibit the activity to some extent. Inhibited by structural analogs such as citrate, cis-aconitate, isocitrate, 2-methylisocitrate, tricarballylate and fluorocitrate, but not by trans-aconitate or adipate. Component of the methylcitrate cycle that catalyzes the dehydration of 2-methylcitrate to 2-methyl-cis-aconitate. The methylcitrate cycle is a metabolic pathway for the consumption of propionic acid. The sequence is that of 2-methylcitrate dehydratase, mitochondrial from Yarrowia lipolytica (strain CLIB 122 / E 150) (Yeast).